We begin with the raw amino-acid sequence, 31 residues long: Antifungal protein 1 (31 aa).

The protein resides in the secreted. Its function is as follows. Antifungal activity against C.albicans ATCC 76615. This Musca domestica (House fly) protein is Antifungal protein 1.